Reading from the N-terminus, the 624-residue chain is 1-deoxy-D-xylulose-5-phosphate synthase (624 aa).

Residues His-80 and 121 to 123 (GHS) contribute to the thiamine diphosphate site. Asp-152 contacts Mg(2+). Thiamine diphosphate is bound by residues 153 to 154 (GA), Asn-181, Tyr-289, and Glu-371. Asn-181 serves as a coordination point for Mg(2+).

The protein belongs to the transketolase family. DXPS subfamily. In terms of assembly, homodimer. It depends on Mg(2+) as a cofactor. The cofactor is thiamine diphosphate.

It carries out the reaction D-glyceraldehyde 3-phosphate + pyruvate + H(+) = 1-deoxy-D-xylulose 5-phosphate + CO2. It participates in metabolic intermediate biosynthesis; 1-deoxy-D-xylulose 5-phosphate biosynthesis; 1-deoxy-D-xylulose 5-phosphate from D-glyceraldehyde 3-phosphate and pyruvate: step 1/1. In terms of biological role, catalyzes the acyloin condensation reaction between C atoms 2 and 3 of pyruvate and glyceraldehyde 3-phosphate to yield 1-deoxy-D-xylulose-5-phosphate (DXP). The chain is 1-deoxy-D-xylulose-5-phosphate synthase from Blochmanniella pennsylvanica (strain BPEN).